The following is a 362-amino-acid chain: Fiber protein (362 aa).

Belongs to the adenoviridae fiber family. Homotrimer. Interacts with host receptor CXCAR. Interacts (via N-terminal tail region) with pentons.

The protein resides in the virion. It is found in the host nucleus. Forms spikes that protrude from each vertex of the icosahedral capsid. Interacts with host receptor CXCAR to provide virion initial attachment to target cell. Fiber proteins are shed during virus entry, when virus is still at the cell surface. The sequence is that of Fiber protein from Homo sapiens (Human).